The chain runs to 508 residues: Probable cytosol aminopeptidase (508 aa).

The Mn(2+) site is built by Lys274 and Asp279. Lys286 is an active-site residue. Mn(2+) contacts are provided by Asp297, Asp356, and Glu358. The active site involves Arg360.

It belongs to the peptidase M17 family. Mn(2+) serves as cofactor.

It localises to the cytoplasm. It carries out the reaction Release of an N-terminal amino acid, Xaa-|-Yaa-, in which Xaa is preferably Leu, but may be other amino acids including Pro although not Arg or Lys, and Yaa may be Pro. Amino acid amides and methyl esters are also readily hydrolyzed, but rates on arylamides are exceedingly low.. The catalysed reaction is Release of an N-terminal amino acid, preferentially leucine, but not glutamic or aspartic acids.. In terms of biological role, presumably involved in the processing and regular turnover of intracellular proteins. Catalyzes the removal of unsubstituted N-terminal amino acids from various peptides. The polypeptide is Probable cytosol aminopeptidase (Paraburkholderia phytofirmans (strain DSM 17436 / LMG 22146 / PsJN) (Burkholderia phytofirmans)).